The chain runs to 239 residues: Orotidine 5'-phosphate decarboxylase (239 aa).

Residues D10, K32, D59 to T68, T122, R184, Q193, G213, and R214 each bind substrate. The active-site Proton donor is the K61.

Belongs to the OMP decarboxylase family. Type 1 subfamily. As to quaternary structure, homodimer.

The enzyme catalyses orotidine 5'-phosphate + H(+) = UMP + CO2. It functions in the pathway pyrimidine metabolism; UMP biosynthesis via de novo pathway; UMP from orotate: step 2/2. In terms of biological role, catalyzes the decarboxylation of orotidine 5'-monophosphate (OMP) to uridine 5'-monophosphate (UMP). This Shouchella clausii (strain KSM-K16) (Alkalihalobacillus clausii) protein is Orotidine 5'-phosphate decarboxylase.